The chain runs to 161 residues: Nucleotide-binding protein Pfl01_4421 (161 aa).

This sequence belongs to the YajQ family.

Functionally, nucleotide-binding protein. This is Nucleotide-binding protein Pfl01_4421 from Pseudomonas fluorescens (strain Pf0-1).